Consider the following 216-residue polypeptide: ATP-dependent Clp protease proteolytic subunit (216 aa).

Residue serine 103 is the Nucleophile of the active site. The active site involves histidine 128. A disordered region spans residues arginine 197 to proline 216.

This sequence belongs to the peptidase S14 family. As to quaternary structure, fourteen ClpP subunits assemble into 2 heptameric rings which stack back to back to give a disk-like structure with a central cavity, resembling the structure of eukaryotic proteasomes.

The protein resides in the cytoplasm. It catalyses the reaction Hydrolysis of proteins to small peptides in the presence of ATP and magnesium. alpha-casein is the usual test substrate. In the absence of ATP, only oligopeptides shorter than five residues are hydrolyzed (such as succinyl-Leu-Tyr-|-NHMec, and Leu-Tyr-Leu-|-Tyr-Trp, in which cleavage of the -Tyr-|-Leu- and -Tyr-|-Trp bonds also occurs).. Its function is as follows. Cleaves peptides in various proteins in a process that requires ATP hydrolysis. Has a chymotrypsin-like activity. Plays a major role in the degradation of misfolded proteins. The chain is ATP-dependent Clp protease proteolytic subunit from Sphingopyxis alaskensis (strain DSM 13593 / LMG 18877 / RB2256) (Sphingomonas alaskensis).